The chain runs to 261 residues: Methylmalonyl-CoA decarboxylase (261 aa).

Residues 64–68 (AGHDI), Gly110, Thr132, and Lys253 contribute to the substrate site.

The protein belongs to the enoyl-CoA hydratase/isomerase family. As to quaternary structure, dimer of homotrimers.

It carries out the reaction (R)-methylmalonyl-CoA + H(+) = propanoyl-CoA + CO2. Functionally, catalyzes the decarboxylation of (R)-methylmalonyl-CoA to propionyl-CoA. Could be part of a pathway that converts succinate to propanoate. This is Methylmalonyl-CoA decarboxylase (scpB) from Escherichia coli (strain K12).